The primary structure comprises 255 residues: Tabinhibitin 1 (255 aa).

Positions 1-23 (MTSILVSRFLIAALVLQYATSDA) are cleaved as a signal peptide. Residues 67 to 211 (LSKINDVRDH…KARALLTCNF (145 aa)) form the SCP domain.

It belongs to the CRISP family. In terms of tissue distribution, expressed in salivary glands.

Its subcellular location is the secreted. Functionally, inhibits platelet aggregation induced by all agonists tested. May act by competing with fibrinogen for binding to glycoprotein IIb/IIIa (ITGA2B/ITGB3). This chain is Tabinhibitin 1, found in Tabanus yao (Horsefly).